A 287-amino-acid chain; its full sequence is ATP synthase gamma chain (287 aa).

This sequence belongs to the ATPase gamma chain family. F-type ATPases have 2 components, CF(1) - the catalytic core - and CF(0) - the membrane proton channel. CF(1) has five subunits: alpha(3), beta(3), gamma(1), delta(1), epsilon(1). CF(0) has three main subunits: a, b and c.

It localises to the cell inner membrane. Its function is as follows. Produces ATP from ADP in the presence of a proton gradient across the membrane. The gamma chain is believed to be important in regulating ATPase activity and the flow of protons through the CF(0) complex. This Yersinia enterocolitica serotype O:8 / biotype 1B (strain NCTC 13174 / 8081) protein is ATP synthase gamma chain.